The sequence spans 116 residues: Putative anti-sigma factor antagonist BtrV (116 aa).

Residues 1 to 110 (MKLTMDKIDG…NSREAAAAAF (110 aa)) form the STAS domain. Ser55 carries the phosphoserine; by BtrW modification.

The protein belongs to the anti-sigma-factor antagonist family. In terms of assembly, interacts with BtrW. Post-translationally, phosphorylated by BtrW. Dephosphorylated by BtrU.

In terms of biological role, possible positive regulator of sigma-B activity. Non-phosphorylated BtrV binds to BtrW, preventing its association with an unknown partner(s) that might be sigma-B. When phosphorylated, releases BtrW, which is then free to complex with and inactivate its partner. Involved in type III secretion system (T3SS). The protein is Putative anti-sigma factor antagonist BtrV (btrV) of Bordetella bronchiseptica (strain ATCC BAA-588 / NCTC 13252 / RB50) (Alcaligenes bronchisepticus).